Reading from the N-terminus, the 899-residue chain is Alanine--tRNA ligase, chloroplastic/mitochondrial (899 aa).

Zn(2+)-binding residues include H581, H585, C683, and H687.

This sequence belongs to the class-II aminoacyl-tRNA synthetase family. Monomer. Requires Zn(2+) as cofactor.

The protein resides in the plastid. Its subcellular location is the chloroplast. It localises to the mitochondrion. The enzyme catalyses tRNA(Ala) + L-alanine + ATP = L-alanyl-tRNA(Ala) + AMP + diphosphate. Catalyzes the attachment of alanine to tRNA(Ala) in a two-step reaction: alanine is first activated by ATP to form Ala-AMP and then transferred to the acceptor end of tRNA(Ala). Also edits incorrectly charged tRNA(Ala) via its editing domain. The protein is Alanine--tRNA ligase, chloroplastic/mitochondrial of Micromonas pusilla (strain CCMP1545) (Picoplanktonic green alga).